The following is a 267-amino-acid chain: MLKAIVTNDDGVHSRSLRALAESLASRGWDVVVAAPLGNWSGYSKSIGRFRGNRVYRFESRGVRFFTGDMPPAALVGTAIDIAGFEPDIVVSGINYGPNLGIYDFFSSGTIGGALEAALRGFKSVSISSACREEETDCLPEALSISLAVVETSVETLSSSAGLMVVNIPRSPRGFKVTRPCRRVPRFSGEIGEEGSLLVEKFDHSRLFSSEHDSCDGRLFSMGYIPVSLYKIDNGWIHPLDPSRDGYLKAVEDILNYKIFPSAGKQF.

Residues Asp-9, Asp-10, Ser-41, and Asn-95 each contribute to the a divalent metal cation site.

It belongs to the SurE nucleotidase family. A divalent metal cation serves as cofactor.

It is found in the cytoplasm. It carries out the reaction a ribonucleoside 5'-phosphate + H2O = a ribonucleoside + phosphate. Functionally, nucleotidase that shows phosphatase activity on nucleoside 5'-monophosphates. The protein is 5'-nucleotidase SurE of Aeropyrum pernix (strain ATCC 700893 / DSM 11879 / JCM 9820 / NBRC 100138 / K1).